The following is a 148-amino-acid chain: MGSDRKIRVVVGGVFDIIHAGHVHFLKMAKELGDELIVIVAHDETVKKRKGRPPINPAEDRAEVLKAIRYVDDVVIGKPGEISLDLIKRLKPDVIALGPDQDFDCEDLKRKLKSIGLNVEVIRLPYLYKKDRAKTSKIIERITEIFCD.

Residues 14-15 (VF), 19-22 (HAGH), and Asp-100 each bind ATP.

This sequence belongs to the archaeal FAD synthase family. In terms of assembly, homodimer. Requires a divalent metal cation as cofactor.

The enzyme catalyses FMN + ATP + H(+) = FAD + diphosphate. It participates in cofactor biosynthesis; FAD biosynthesis; FAD from FMN: step 1/1. Catalyzes the transfer of the AMP portion of ATP to flavin mononucleotide (FMN) to produce flavin adenine dinucleotide (FAD) coenzyme. The chain is FAD synthase from Pyrococcus horikoshii (strain ATCC 700860 / DSM 12428 / JCM 9974 / NBRC 100139 / OT-3).